A 426-amino-acid polypeptide reads, in one-letter code: Putative 3-oxoacyl-[acyl-carrier-protein] synthase, mitochondrial (426 aa).

A mitochondrion-targeting transit peptide spans 1 to 18 (MKRVVITGLGAVTPLGNG). The region spanning 19-423 (VKTNWRNLIQ…GTNASLCFKK (405 aa)) is the Ketosynthase family 3 (KS3) domain. Active-site for beta-ketoacyl synthase activity residues include Cys-170, His-311, and His-351.

The protein belongs to the thiolase-like superfamily. Beta-ketoacyl-ACP synthases family.

Its subcellular location is the mitochondrion. It carries out the reaction a fatty acyl-[ACP] + malonyl-[ACP] + H(+) = a 3-oxoacyl-[ACP] + holo-[ACP] + CO2. The catalysed reaction is butanoyl-[ACP] + malonyl-[ACP] + H(+) = 3-oxohexanoyl-[ACP] + holo-[ACP] + CO2. It catalyses the reaction hexanoyl-[ACP] + malonyl-[ACP] + H(+) = 3-oxooctanoyl-[ACP] + holo-[ACP] + CO2. The enzyme catalyses octanoyl-[ACP] + malonyl-[ACP] + H(+) = 3-oxodecanoyl-[ACP] + holo-[ACP] + CO2. It carries out the reaction decanoyl-[ACP] + malonyl-[ACP] + H(+) = 3-oxododecanoyl-[ACP] + holo-[ACP] + CO2. The catalysed reaction is dodecanoyl-[ACP] + malonyl-[ACP] + H(+) = 3-oxotetradecanoyl-[ACP] + holo-[ACP] + CO2. It catalyses the reaction tetradecanoyl-[ACP] + malonyl-[ACP] + H(+) = 3-oxohexadecanoyl-[ACP] + holo-[ACP] + CO2. It participates in lipid metabolism; fatty acid biosynthesis. Functionally, may play a role in the biosynthesis of lipoic acid as well as longer chain fatty acids required for optimal mitochondrial function. The sequence is that of Putative 3-oxoacyl-[acyl-carrier-protein] synthase, mitochondrial from Schizosaccharomyces pombe (strain 972 / ATCC 24843) (Fission yeast).